The primary structure comprises 426 residues: L-cysteine:1D-myo-inositol 2-amino-2-deoxy-alpha-D-glucopyranoside ligase (426 aa).

Residue Cys-43 participates in Zn(2+) binding. L-cysteinyl-5'-AMP contacts are provided by residues 43 to 46 (CGIT), Ser-58, and 81 to 83 (NVT). The 'HIGH' region signature appears at 45–55 (ITPYDATHMGH). The 'ERGGDP' region signature appears at 200–205 (ERGGDP). Residue Trp-241 participates in L-cysteinyl-5'-AMP binding. Zn(2+) is bound at residue Cys-245. An L-cysteinyl-5'-AMP-binding site is contributed by 263–265 (GSD). His-270 serves as a coordination point for Zn(2+). Val-296 contacts L-cysteinyl-5'-AMP. The 'KMSKS' region motif lies at 302 to 306 (KMSKS).

It belongs to the class-I aminoacyl-tRNA synthetase family. MshC subfamily. In terms of assembly, monomer. It depends on Zn(2+) as a cofactor.

The enzyme catalyses 1D-myo-inositol 2-amino-2-deoxy-alpha-D-glucopyranoside + L-cysteine + ATP = 1D-myo-inositol 2-(L-cysteinylamino)-2-deoxy-alpha-D-glucopyranoside + AMP + diphosphate + H(+). In terms of biological role, catalyzes the ATP-dependent condensation of GlcN-Ins and L-cysteine to form L-Cys-GlcN-Ins. This Arthrobacter sp. (strain FB24) protein is L-cysteine:1D-myo-inositol 2-amino-2-deoxy-alpha-D-glucopyranoside ligase.